Consider the following 254-residue polypeptide: Nickel import ATP-binding protein NikD (254 aa).

The 240-residue stretch at Pro-2–Val-241 folds into the ABC transporter domain. Position 36 to 43 (Gly-36 to Ser-43) interacts with ATP.

This sequence belongs to the ABC transporter superfamily. Nickel importer (TC 3.A.1.5.3) family. The complex is composed of two ATP-binding proteins (NikD and NikE), two transmembrane proteins (NikB and NikC) and a solute-binding protein (NikA).

Its subcellular location is the cell inner membrane. The enzyme catalyses Ni(2+)(out) + ATP + H2O = Ni(2+)(in) + ADP + phosphate + H(+). Its function is as follows. Part of the ABC transporter complex NikABCDE involved in nickel import. Responsible for energy coupling to the transport system. This chain is Nickel import ATP-binding protein NikD, found in Escherichia coli (strain UTI89 / UPEC).